Consider the following 283-residue polypeptide: Non-selective voltage-gated ion channel VDAC1 (283 aa).

Position 2 is an N-acetylalanine (Ala2). Lys12 serves as a coordination point for ATP. Lys12 is covalently cross-linked (Glycyl lysine isopeptide (Lys-Gly) (interchain with G-Cter in ubiquitin)). Phosphoserine is present on Ser13. A Phosphothreonine modification is found at Thr19. Lys20 lines the ATP pocket. The residue at position 20 (Lys20) is an N6-acetyllysine; alternate. Lys20 carries the post-translational modification N6-succinyllysine; alternate. Residue Lys20 forms a Glycyl lysine isopeptide (Lys-Gly) (interchain with G-Cter in ubiquitin); alternate linkage. 2 consecutive transmembrane segments (beta stranded) span residues 26–35 (LIKLDLKTKS) and 39–47 (LEFTSSGSA). Residues Lys53 and Lys61 each participate in a glycyl lysine isopeptide (Lys-Gly) (interchain with G-Cter in ubiquitin) cross-link. A beta stranded transmembrane segment spans residues 54-64 (VTGSLETKYRW). At Tyr67 the chain carries Phosphotyrosine. Beta stranded transmembrane passes span 69-76 (LTFTEKWN), 80-89 (TLGTEITVED), and 95-104 (LKLTFDSSFS). At Thr107 the chain carries Phosphothreonine. Lys109 carries the N6-acetyllysine; alternate modification. A Glycyl lysine isopeptide (Lys-Gly) (interchain with G-Cter in ubiquitin); alternate cross-link involves residue Lys109. Lys110 participates in a covalent cross-link: Glycyl lysine isopeptide (Lys-Gly) (interchain with G-Cter in ubiquitin). The next 4 beta stranded transmembrane spans lie at 111–120 (NAKIKTGYKR), 123–130 (INLGCDVD), 137–145 (SIRGALVLG), and 150–158 (LAGYQMNFE). A Glycyl lysine isopeptide (Lys-Gly) (interchain with G-Cter in ubiquitin) cross-link involves residue Lys161. A run of 6 beta stranded transmembrane segments spans residues 163 to 175 (RVTQ…GYKT), 178 to 185 (FQLHTNVN), 189 to 198 (EFGGSIYQKV), 202 to 211 (LETAVNLAWT), 218 to 227 (RFGIAAKYQI), and 231 to 238 (ACFSAKVN). Ser193 is modified (phosphoserine; by NEK1). Ser240 carries the post-translational modification Phosphoserine. 242–244 (LIG) contributes to the NAD(+) binding site. The beta stranded transmembrane segment at 242–251 (LIGLGYTQTL) threads the bilayer. The residue at position 252 (Lys252) is an N6-acetyllysine. Residues 254 to 263 (GIKLTLSALL) form a beta stranded membrane-spanning segment. An NAD(+)-binding site is contributed by 260-264 (SALLD). At Lys266 the chain carries N6-acetyllysine; alternate. Lys266 participates in a covalent cross-link: Glycyl lysine isopeptide (Lys-Gly) (interchain with G-Cter in ubiquitin); alternate. Residues 273–282 (HKLGLGLEFQ) traverse the membrane as a beta stranded segment. A Glycyl lysine isopeptide (Lys-Gly) (interchain with G-Cter in ubiquitin) cross-link involves residue Lys274.

Belongs to the eukaryotic mitochondrial porin family. Homodimer and homotrimer; in response to cyclic AMP or calcium; oligomerization is required for scramblase activity. Component of the mitochondrial permeability transition pore complex (mPTPC), at least composed of SPG7, VDAC1 and PPIF. Interacts with SPG7, NIPSNAP2 and SLC25A30. Interacts with hexokinases including HK1. The HK1-VDAC1 complex interacts with ATF2. Interacts with BCL2L1. Interacts with BAK1. Interacts with RTL10/BOP (via BH3 domain). Interacts with amyloid-beta and APP; induces VDAC1 dephosphorylation. Interacts with TMEM41B. Interacts with BCAP31. Interacts with HSPA9; this interaction couples ITPR1 to VDAC1. Post-translationally, phosphorylation at Ser-193 by NEK1 promotes the closed conformational state preventing excessive mitochondrial membrane permeability and subsequent apoptotic cell death after injury. Phosphorylation by the AKT-GSK3B axis stabilizes the protein probably by preventing ubiquitin-mediated proteasomal degradation. In terms of processing, ubiquitinated. Undergoes monoubiquitination and polyubiquitination by PRKN; monoubiquitination at Lys-274 inhibits apoptosis, whereas polyubiquitination leads to its degradation and promotes mitophagy. Deubiquitinated by USP30. In terms of tissue distribution, predominantly in brain astrocytes.

It localises to the mitochondrion outer membrane. The protein resides in the cell membrane. The protein localises to the membrane raft. It carries out the reaction chloride(in) = chloride(out). The catalysed reaction is K(+)(in) = K(+)(out). The enzyme catalyses ATP(in) = ATP(out). It catalyses the reaction Ca(2+)(in) = Ca(2+)(out). It carries out the reaction Na(+)(in) = Na(+)(out). The catalysed reaction is Mg(2+)(in) = Mg(2+)(out). The enzyme catalyses L-glutamate(out) = L-glutamate(in). It catalyses the reaction dopamine(out) = dopamine(in). It carries out the reaction acetylcholine(in) = acetylcholine(out). The catalysed reaction is Fe(III)-[cytochrome c](out) = Fe(III)-[cytochrome c](in). The enzyme catalyses a 1,2-diacyl-sn-glycero-3-phosphocholine(in) = a 1,2-diacyl-sn-glycero-3-phosphocholine(out). It catalyses the reaction a 1,2-diacyl-sn-glycero-3-phospho-L-serine(in) = a 1,2-diacyl-sn-glycero-3-phospho-L-serine(out). Its activity is regulated as follows. Inhibited by nitric oxide. Non-selective voltage-gated ion channel that mediates the transport of anions and cations through the mitochondrion outer membrane and plasma membrane. The channel at the outer mitochondrial membrane allows diffusion of small hydrophilic molecules; in the plasma membrane it is involved in cell volume regulation and apoptosis. It adopts an open conformation at low or zero membrane potential and a closed conformation at potentials above 30-40 mV. The open state has a weak anion selectivity whereas the closed state is cation-selective. Binds various signaling molecules, including the sphingolipid ceramide, the phospholipid phosphatidylcholine, and the sterols cholesterol and oxysterol. In depolarized mitochondria, acts downstream of PRKN and PINK1 to promote mitophagy or prevent apoptosis; polyubiquitination by PRKN promotes mitophagy, while monoubiquitination by PRKN decreases mitochondrial calcium influx which ultimately inhibits apoptosis. May participate in the formation of the permeability transition pore complex (PTPC) responsible for the release of mitochondrial products that triggers apoptosis. May mediate ATP export from cells. Part of a complex composed of HSPA9, ITPR1 and VDAC1 that regulates mitochondrial calcium-dependent apoptosis by facilitating calcium transport from the ER lumen to the mitochondria intermembrane space thus providing calcium for the downstream calcium channel MCU that directly releases it into mitochondria matrix. Mediates cytochrome c efflux. Functionally, catalyzes the scrambling of phospholipids across the outer mitochondrial membrane; the mechanism is unrelated to channel activity and is capable of translocating both anionic and zwitterionic phospholipids. This Bos taurus (Bovine) protein is Non-selective voltage-gated ion channel VDAC1.